The sequence spans 481 residues: Drebrin-like protein (481 aa).

Residues 3-131 (SLDISDPDIT…DEKAITAALN (129 aa)) enclose the ADF-H domain. Residues 217 to 227 (YWKQQQAEKQK) show a composition bias toward basic and acidic residues. Positions 217–423 (YWKQQQAEKQ…PAEEQYDQSG (207 aa)) are disordered. Over residues 228 to 237 (QQQQQQQQQA) the composition is skewed to low complexity. A compositionally biased stretch (polar residues) spans 248-261 (TVGNKFQEQVSKPT). Positions 291 to 300 (PPAPSRPAAP) are enriched in pro residues. Over residues 325–335 (QYEEPQYEEEQ) the composition is skewed to acidic residues. The segment covering 336-413 (QQQYEEQPTE…YQEEQQQYEQ (78 aa)) has biased composition (low complexity). The SH3 domain maps to 422–481 (SGYLQAKALYDYNGENDGDLSFREGDIITILDQSDPDGWWQGSLPTGEQGFFPSNFVQQL).

Belongs to the ABP1 family.

It is found in the cytoplasm. It localises to the cytoskeleton. Its subcellular location is the cell projection. The protein resides in the pseudopodium. Functionally, actin-binding adapter protein. Binds to F-actin but is not involved in actin polymerization, capping or bundling. Does not bind G-actin. Controls pseudopodium number and motility in early stages of chemotactic aggregation. In Dictyostelium discoideum (Social amoeba), this protein is Drebrin-like protein (abpE-1).